A 471-amino-acid polypeptide reads, in one-letter code: Trehalose-binding lipoprotein LpqY (471 aa).

The first 28 residues, 1–28, serve as a signal peptide directing secretion; it reads MDGRQVVRARRWCATAAVALMTASTVAA. C29 carries N-palmitoyl cysteine lipidation. C29 carries S-diacylglycerol cysteine lipidation. Alpha,alpha-trehalose is bound by residues N45, E46, Q79, D100, N154, Y198, W279, Y281, G354, and R424. Residues C57 and C375 are joined by a disulfide bond.

Belongs to the bacterial solute-binding protein 1 family. As to quaternary structure, monomer. The complex is composed of two ATP-binding proteins (SugC), two transmembrane proteins (SugA and SugB) and a solute-binding protein (LpqY).

The protein resides in the cell inner membrane. Part of the ABC transporter complex LpqY-SugA-SugB-SugC, which is highly specific for uptake of trehalose. Involved in the recycling of extracellular trehalose released from trehalose-containing molecules synthesized by M.thermoresistibile. Trehalose uptake is essential for virulence. Binds deuterated trehalose with similar high affinity to trehalose, trehalose analogs including galactotrehalose, 4-azido-4-deoxy-trehalose, 6-azido-6-deoxy-trehalose, 3-azido-3-deoxy-trehalose and mannotrehalose in the order of decreasing affinity, respectively, and 2-azido-2-deoxy-trehalose and kojibiose (alpha1,2-glycosidic bond) with very low affinity. Does not recognize single glucose, 6-amino-6-deoxy-trehalose, trehalose-6-phosphate, nigerose (alpha1,3-glycosidic bond), maltose (alpha1,4-glycosidic bond), isomaltose (alpha1,6-glycosidic bond) or glycerophosphocholine. Decreased recognition of alpha,beta-trehalose and almost no recognition of beta,beta-trehalose. Substrate specificity indicates a strict requirement for an alpha1,1-linked disaccharide. The protein is Trehalose-binding lipoprotein LpqY of Mycolicibacterium thermoresistibile (strain ATCC 19527 / DSM 44167 / CIP 105390 / JCM 6362 / NCTC 10409 / 316) (Mycobacterium thermoresistibile).